The primary structure comprises 31 residues: Cyclotide mden-L (31 aa).

Residues 1–31 (GSIPCGESCVYIPCISAVLGCSCKNKVCYRN) constitute a cross-link (cyclopeptide (Gly-Asn)). 3 cysteine pairs are disulfide-bonded: cysteine 5-cysteine 21, cysteine 9-cysteine 23, and cysteine 14-cysteine 28.

The protein belongs to the cyclotide family. Bracelet subfamily. This is a cyclic peptide.

In terms of biological role, probably participates in a plant defense mechanism. This chain is Cyclotide mden-L, found in Melicytus dentatus (Tree violet).